A 61-amino-acid chain; its full sequence is Bacteriocin leucocin-B (61 aa).

Positions 1-24 are excised as a propeptide; that stretch reads MNNMKSADNYQQLDNNALEQVVGG. A disulfide bridge links Cys-33 with Cys-38.

It belongs to the bacteriocin class IIA/YGNGV family.

It is found in the secreted. Active against L.monocytogenes and several lactic acid bacteria. This Leuconostoc carnosum protein is Bacteriocin leucocin-B.